A 200-amino-acid polypeptide reads, in one-letter code: ATP-dependent Clp protease proteolytic subunit (200 aa).

Residue serine 101 is the Nucleophile of the active site. The active site involves histidine 126.

This sequence belongs to the peptidase S14 family. As to quaternary structure, component of the chloroplastic Clp protease core complex.

Its subcellular location is the plastid. The protein resides in the chloroplast stroma. It catalyses the reaction Hydrolysis of proteins to small peptides in the presence of ATP and magnesium. alpha-casein is the usual test substrate. In the absence of ATP, only oligopeptides shorter than five residues are hydrolyzed (such as succinyl-Leu-Tyr-|-NHMec, and Leu-Tyr-Leu-|-Tyr-Trp, in which cleavage of the -Tyr-|-Leu- and -Tyr-|-Trp bonds also occurs).. Its function is as follows. Cleaves peptides in various proteins in a process that requires ATP hydrolysis. Has a chymotrypsin-like activity. Plays a major role in the degradation of misfolded proteins. The sequence is that of ATP-dependent Clp protease proteolytic subunit from Adiantum capillus-veneris (Maidenhair fern).